Reading from the N-terminus, the 297-residue chain is Non-homologous end-joining factor 1 (297 aa).

The tract at residues methionine 1 to leucine 131 is globular head. Residues proline 220 to serine 286 form a C-terminal tail region. The interval alanine 222–methionine 297 is disordered. Over residues glycine 232–glutamine 255 the composition is skewed to polar residues. Residues valine 263–serine 286 show a composition bias toward low complexity. The short motif at lysine 287 to methionine 297 is the XLM element. Basic residues predominate over residues lysine 287–methionine 297.

This sequence belongs to the XRCC4-XLF family. XLF subfamily. Homodimer. Interacts with xrcc4; the interaction is direct and is mediated via a head-to-head interaction between N-terminal head regions. Component of the core long-range non-homologous end joining (NHEJ) complex (also named DNA-PK complex) composed of prkdc/DNA-PKcs, lig4, xrcc4, xrcc6/Ku70, xrcc5/Ku80 and nhej1/xlf.

Its subcellular location is the nucleus. In terms of biological role, DNA repair protein involved in DNA non-homologous end joining (NHEJ); required for double-strand break (DSB) repair and V(D)J recombination. It is also involved in telomere maintenance. Plays a key role in NHEJ by promoting the ligation of various mismatched and non-cohesive ends. In some studies, has been shown to associate with xrcc4 to form alternating helical filaments that bridge DNA and act like a bandage, holding together the broken DNA until it is repaired. Alternatively, it has also been shown that rather than forming filaments, a single nhej1 dimer interacts through both head domains with xrcc4 to promote the close alignment of DNA ends. The xrcc4-nhej1/xlf subcomplex binds to the DNA fragments of a DSB in a highly diffusive manner and robustly bridges two independent DNA molecules, holding the broken DNA fragments in close proximity to one other. The mobility of the bridges ensures that the ends remain accessible for further processing by other repair factors. This chain is Non-homologous end-joining factor 1, found in Xenopus laevis (African clawed frog).